A 260-amino-acid polypeptide reads, in one-letter code: 5'-nucleotidase SurE (260 aa).

The a divalent metal cation site is built by Asp-8, Asp-9, Ser-39, and Asn-96.

Belongs to the SurE nucleotidase family. A divalent metal cation serves as cofactor.

The protein resides in the cytoplasm. It catalyses the reaction a ribonucleoside 5'-phosphate + H2O = a ribonucleoside + phosphate. Its function is as follows. Nucleotidase that shows phosphatase activity on nucleoside 5'-monophosphates. The protein is 5'-nucleotidase SurE of Moorella thermoacetica (strain ATCC 39073 / JCM 9320).